A 179-amino-acid polypeptide reads, in one-letter code: Large ribosomal subunit protein uL5 (179 aa).

It belongs to the universal ribosomal protein uL5 family. As to quaternary structure, part of the 50S ribosomal subunit; part of the 5S rRNA/L5/L18/L25 subcomplex. Contacts the 5S rRNA and the P site tRNA. Forms a bridge to the 30S subunit in the 70S ribosome.

In terms of biological role, this is one of the proteins that bind and probably mediate the attachment of the 5S RNA into the large ribosomal subunit, where it forms part of the central protuberance. In the 70S ribosome it contacts protein S13 of the 30S subunit (bridge B1b), connecting the 2 subunits; this bridge is implicated in subunit movement. Contacts the P site tRNA; the 5S rRNA and some of its associated proteins might help stabilize positioning of ribosome-bound tRNAs. The polypeptide is Large ribosomal subunit protein uL5 (Synechococcus elongatus (strain ATCC 33912 / PCC 7942 / FACHB-805) (Anacystis nidulans R2)).